We begin with the raw amino-acid sequence, 210 residues long: Pyrrolidone-carboxylate peptidase (210 aa).

Active-site residues include glutamate 80, cysteine 143, and histidine 162.

The protein belongs to the peptidase C15 family. In terms of assembly, homotetramer.

The protein resides in the cytoplasm. It catalyses the reaction Release of an N-terminal pyroglutamyl group from a polypeptide, the second amino acid generally not being Pro.. Functionally, removes 5-oxoproline from various penultimate amino acid residues except L-proline. This chain is Pyrrolidone-carboxylate peptidase, found in Chromobacterium violaceum (strain ATCC 12472 / DSM 30191 / JCM 1249 / CCUG 213 / NBRC 12614 / NCIMB 9131 / NCTC 9757 / MK).